The chain runs to 402 residues: Potassium channel subfamily K member 9 (402 aa).

Topologically, residues 1 to 8 (MKRQNVRT) are cytoplasmic. The chain crosses the membrane as a helical span at residues 9–29 (LSLIACTFTYLLVGAAVFDAL). Topologically, residues 30–88 (ESDHEMREEEKLKAEEVRLRGKYNISSDDYQQLELVILQSEPHRAGVQWKFAGSFYFAI) are extracellular. N53 carries an N-linked (GlcNAc...) asparagine glycan. The pore-forming intramembrane region spans 89–101 (TVITTIGYGHAAP). K(+) is bound by residues T93, I94, G95, and Y96. Residues 93 to 98 (TIGYGH) form a selectivity filter 1 region. Over 102–107 (GTDAGK) the chain is Extracellular. The helical transmembrane segment at 108-128 (AFCMFYAVLGIPLTLVMFQSL) threads the bilayer. At 129-158 (GERMNTFVRYLLKRIKKCCGMRNTEVSMEN) the chain is on the cytoplasmic side. The chain crosses the membrane as a helical span at residues 159–179 (MVTVGFFSCMGTLCLGAAAFS). Residues 180 to 194 (QCEDWSFFHAYYYCF) lie on the Extracellular side of the membrane. An intramembrane region (pore-forming) is located at residues 195–207 (ITLTTIGFGDFVA). 4 residues coordinate K(+): T199, I200, G201, and F202. Residues 199 to 204 (TIGFGD) form a selectivity filter 2 region. At 208 to 218 (LQAKGALQRKP) the chain is on the extracellular side. Residues 219-239 (FYVAFSFMYILVGLTVIGAFL) form a helical membrane-spanning segment. The Cytoplasmic segment spans residues 240-402 (NLVVLRFLTM…HRLHLRRKSI (163 aa)). The tract at residues 243–248 (VLRFLT) is X-gate.

This sequence belongs to the two pore domain potassium channel (TC 1.A.1.8) family. In terms of assembly, homodimer. Heterodimer with KCNK1. Heterodimer with KCNK3. Expressed in adrenal glands mainly in outer zona glomerulosa and inner zona medullaris. Expressed in retinal ganglion cells. Expressed in dentate gyrus (at protein level).

It is found in the cell membrane. The protein localises to the mitochondrion inner membrane. The protein resides in the cell projection. It localises to the dendrite. It catalyses the reaction K(+)(in) = K(+)(out). The catalysed reaction is Na(+)(in) = Na(+)(out). With respect to regulation, inhibited by NTS:NTSR1 signaling in dentate gyrus granule cells. In terms of biological role, k(+) channel that conducts voltage-dependent outward rectifying currents upon membrane depolarization. Voltage sensing is coupled to K(+) electrochemical gradient in an 'ion flux gating' mode where outward but not inward ion flow opens the gate. Changes ion selectivity and becomes permeable to Na(+) ions in response to extracellular acidification. Protonation of the pH sensor His-98 stabilizes C-type inactivation conformation likely converting the channel from outward K(+)-conducting, to inward Na(+)-conducting to nonconductive state. Homo- and heterodimerizes to form functional channels with distinct regulatory and gating properties. Allows K(+) currents with fast-gating kinetics important for the repolarization and hyperpolarization phases of action potentials. In granule neurons, hyperpolarizes the resting membrane potential to limit intrinsic neuronal excitability, but once the action potential threshold is reached, supports high-frequency action potential firing and increased neuronal excitability. Homomeric and/or heteromeric KCNK3:KCNK9 channels operate in cerebellar granule cells, whereas heteromeric KCNK1:KCNK9 enables currents in hippocampal dentate gyrus granule neurons. Dispensable for central chemosensory respiration i.e. breathing controlled by brainstem CO2/pH, it rather conducts pH-sensitive currents and controls the firing rate of serotonergic raphe neurons involved in potentiation of the respiratory chemoreflex. In retinal ganglion cells, mediates outward rectifying currents that regulate action potentials in response to acidification of the synaptic cleft. Involved in transmission of image-forming and nonimage-forming visual information in the retina. In adrenal gland, contributes to the maintenance of a hyperpolarized resting membrane potential of aldosterone-producing cells at zona glomerulosa and limits aldosterone release as part of a regulatory mechanism that controls arterial blood pressure and electrolyte homeostasis. In Mus musculus (Mouse), this protein is Potassium channel subfamily K member 9.